An 856-amino-acid polypeptide reads, in one-letter code: Dual specificity protein kinase TTK (856 aa).

M1 is subject to N-acetylmethionine. S7 is modified (phosphoserine). Phosphothreonine is present on T33. A phosphoserine mark is found at S37, S80, S281, S317, and S321. Position 360 is a phosphothreonine (T360). S363 bears the Phosphoserine mark. The disordered stretch occupies residues 369 to 392; it reads EETKEYQEPEVPESNQKQWQSKRK. Phosphoserine is present on residues S393, S435, and S454. A Protein kinase domain is found at 524–790; it reads YSILKQIGSG…IPELLAHPYV (267 aa). ATP contacts are provided by residues 530-538 and K552; that span reads IGSGGSSKV. Residue D646 is the Proton acceptor of the active site. At S820 the chain carries Phosphoserine. Low complexity predominate over residues 835 to 846; the sequence is YSGGESHNSSSS. Residues 835–856 form a disordered region; sequence YSGGESHNSSSSKTFGKKREKK.

The protein belongs to the protein kinase superfamily. Ser/Thr protein kinase family. As to quaternary structure, interacts with TPR; the interactions occurs in a microtubule-independent manner. Interacts with MAD1L1 and MAD2L1.

The catalysed reaction is L-seryl-[protein] + ATP = O-phospho-L-seryl-[protein] + ADP + H(+). The enzyme catalyses L-threonyl-[protein] + ATP = O-phospho-L-threonyl-[protein] + ADP + H(+). It catalyses the reaction L-tyrosyl-[protein] + ATP = O-phospho-L-tyrosyl-[protein] + ADP + H(+). With respect to regulation, inhibited by the ATP-competitive kinase inhibitor, SP600125. Its function is as follows. Involved in mitotic spindle assembly checkpoint signaling, a process that delays anaphase until chromosomes are bioriented on the spindle, and in the repair of incorrect mitotic kinetochore-spindle microtubule attachments. Phosphorylates MAD1L1 to promote the mitotic spindle assembly checkpoint. Phosphorylates CDCA8/Borealin leading to enhanced AURKB activity at the kinetochore. Phosphorylates SKA3 at 'Ser-34' leading to dissociation of the SKA complex from microtubules and destabilization of microtubule-kinetochore attachments. Phosphorylates KNL1, KNTC1 and autophosphorylates. Phosphorylates MCRS1 which enhances recruitment of KIF2A to the minus end of spindle microtubules and promotes chromosome alignment. The sequence is that of Dual specificity protein kinase TTK (TTK) from Macaca fascicularis (Crab-eating macaque).